We begin with the raw amino-acid sequence, 251 residues long: Xylose/arabinose import ATP-binding protein XylG (251 aa).

The ABC transporter domain occupies 5 to 241 (LEIRDVHKSF…EITEVMTSFA (237 aa)). 37–44 (GDNGAGKS) lines the ATP pocket.

It belongs to the ABC transporter superfamily. As to quaternary structure, the complex is composed of two ATP-binding proteins (XylG), two transmembrane proteins (XylH) and a solute-binding protein (XylF).

The protein localises to the cell membrane. It catalyses the reaction D-xylose(out) + ATP + H2O = D-xylose(in) + ADP + phosphate + H(+). The catalysed reaction is L-arabinose(out) + ATP + H2O = L-arabinose(in) + ADP + phosphate + H(+). In terms of biological role, part of the ABC transporter complex XylFGH involved in the uptake of xylose and arabinose. Responsible for energy coupling to the transport system. The chain is Xylose/arabinose import ATP-binding protein XylG from Sulfolobus acidocaldarius (strain ATCC 33909 / DSM 639 / JCM 8929 / NBRC 15157 / NCIMB 11770).